The primary structure comprises 176 residues: Interleukin-19 (176 aa).

An N-terminal signal peptide occupies residues 1 to 24 (MKTQCASTWLLGMTLILCSVHIYS). 3 disulfides stabilise this stretch: cysteine 28/cysteine 120, cysteine 74/cysteine 126, and cysteine 75/cysteine 128. Asparagine 56 carries N-linked (GlcNAc...) asparagine glycosylation. N-linked (GlcNAc...) asparagine glycans are attached at residues asparagine 127 and asparagine 134.

This sequence belongs to the IL-10 family.

Its subcellular location is the secreted. Functionally, cytokine that functions as an anti-inflammatory and proangiogenic factor. Polarizes adaptive immunity to an anti-inflammatory phenotype through induction of T-helper 2 responses by both down-regulation of IFN-gamma and up-regulation of IL4 and IL5. Produced by osteocytes, stimulates granulopoiesis and neutrophil formation. Exerts its biological effect through a receptor complex consisting of a heterodimer of IL20RA and IL20RB. In turn, activates the Janus kinase (JAK) and signal transducer and activator of transcription (STAT) pathway, and importantly, STAT3. The sequence is that of Interleukin-19 (Il19) from Mus musculus (Mouse).